The following is a 516-amino-acid chain: Protein DML1 (516 aa).

Belongs to the misato family.

The protein localises to the mitochondrion. Functionally, involved in the partitioning of the mitochondrial organelle and mitochondrial DNA (mtDNA) inheritance. The polypeptide is Protein DML1 (DML1) (Coccidioides immitis (strain RS) (Valley fever fungus)).